The primary structure comprises 490 residues: Betaine aldehyde dehydrogenase (490 aa).

Residues serine 26, isoleucine 27, and aspartate 93 each coordinate K(+). Residue 150-152 (GAW) participates in NAD(+) binding. The active-site Charge relay system is the lysine 162. 176–179 (KPSE) contacts NAD(+). Valine 180 is a K(+) binding site. 230 to 233 (GVAT) is a binding site for NAD(+). Leucine 246 lines the K(+) pocket. Glutamate 252 (proton acceptor) is an active-site residue. 3 residues coordinate NAD(+): glycine 254, cysteine 286, and glutamate 387. The active-site Nucleophile is the cysteine 286. Cysteine 286 is modified (cysteine sulfenic acid (-SOH)). Positions 457 and 460 each coordinate K(+). The Charge relay system role is filled by glutamate 464.

This sequence belongs to the aldehyde dehydrogenase family. Dimer of dimers. It depends on K(+) as a cofactor.

It carries out the reaction betaine aldehyde + NAD(+) + H2O = glycine betaine + NADH + 2 H(+). It functions in the pathway amine and polyamine biosynthesis; betaine biosynthesis via choline pathway; betaine from betaine aldehyde: step 1/1. Involved in the biosynthesis of the osmoprotectant glycine betaine. Catalyzes the irreversible oxidation of betaine aldehyde to the corresponding acid. This Stutzerimonas stutzeri (strain A1501) (Pseudomonas stutzeri) protein is Betaine aldehyde dehydrogenase.